Consider the following 452-residue polypeptide: Enolase (452 aa).

Q167 contributes to the (2R)-2-phosphoglycerate binding site. E209 serves as the catalytic Proton donor. Positions 250, 310, and 337 each coordinate Mg(2+). (2R)-2-phosphoglycerate-binding residues include K362, R391, S392, and K413. The Proton acceptor role is filled by K362.

This sequence belongs to the enolase family. Mg(2+) serves as cofactor.

Its subcellular location is the cytoplasm. It is found in the secreted. It localises to the cell surface. It catalyses the reaction (2R)-2-phosphoglycerate = phosphoenolpyruvate + H2O. The protein operates within carbohydrate degradation; glycolysis; pyruvate from D-glyceraldehyde 3-phosphate: step 4/5. Its function is as follows. Catalyzes the reversible conversion of 2-phosphoglycerate (2-PG) into phosphoenolpyruvate (PEP). It is essential for the degradation of carbohydrates via glycolysis. The chain is Enolase from Mycoplasmopsis synoviae (strain 53) (Mycoplasma synoviae).